The primary structure comprises 354 residues: MSKVKSITRESWILSTFPEWGSWLNEEIEQEQVAPGTFAMWWLGCTGIWLKSEGGANVCVDFWCGTGKQSHGNPFMKQGHQMQRMAGVKKLQPNLRTTPFVLDPFAIRQIDAVLATHDHNDHIDVNVAAAVMQNCADDVPFIGPKTCVDLWIGWGVPKERCIVVKPGDVVKVKDIEIHALDAFDRTALITLPADQKAAGVLPDGMDDRAVNYLFKTPGGTLYHSGDSHYSNYYAKHGNEHQIDVALGSYGENPRGITDKMTSADILRMGEALNAKVVIPFHHDIWSNFQADPQEIRVLWEMKKDRLKYGFKPFIWQVGGKFTWPLDKDNFEYHYPRGFDDCFTIEPDLPFKSFL.

The protein belongs to the UlaG family. It depends on a divalent metal cation as a cofactor.

It is found in the cytoplasm. The enzyme catalyses L-ascorbate 6-phosphate + H2O = 3-dehydro-L-gulonate 6-phosphate. It participates in cofactor degradation; L-ascorbate degradation; D-xylulose 5-phosphate from L-ascorbate: step 1/4. Functionally, probably catalyzes the hydrolysis of L-ascorbate-6-P into 3-keto-L-gulonate-6-P. Is essential for L-ascorbate utilization under anaerobic conditions. This chain is Probable L-ascorbate-6-phosphate lactonase UlaG, found in Escherichia coli O127:H6 (strain E2348/69 / EPEC).